The chain runs to 212 residues: Small ribosomal subunit protein eS1 (212 aa).

Belongs to the eukaryotic ribosomal protein eS1 family.

The sequence is that of Small ribosomal subunit protein eS1 from Staphylothermus marinus (strain ATCC 43588 / DSM 3639 / JCM 9404 / F1).